The following is a 229-amino-acid chain: Zinc finger matrin-type protein 4 (229 aa).

Matrin-type zinc fingers lie at residues 14-44 (SYCK…KVRL) and 72-106 (DKNK…LKLL). The tract at residues 116–135 (TATPLSPLKPPRMDTAPVVA) is disordered. 2 Matrin-type zinc fingers span residues 145–175 (RYCG…NAAR) and 198–228 (YRCT…NLKN).

It is found in the nucleus. This Homo sapiens (Human) protein is Zinc finger matrin-type protein 4 (ZMAT4).